A 574-amino-acid polypeptide reads, in one-letter code: Bifunctional NAD(P)H-hydrate repair enzyme Nnr (574 aa).

The NAD(P)H-hydrate epimerase stretch occupies residues 1 to 269 (MKPVFSVDQI…SLFERANLKA (269 aa)). Residues 10 to 231 (IRRAENTLFE…DINIAGGGGK (222 aa)) enclose the YjeF N-terminal domain. The segment at 64–68 (GNGGD) is NADPHX 1; for epimerase activity. 2 residues coordinate K(+): Asn65 and Asp123. Residues 127–133 (GIGGRGG) form an NADPHX 1; for epimerase activity region. Asp156 lines the (6S)-NADPHX pocket. Ser159 is a K(+) binding site. Positions 277–568 (IGQHFTVLNM…DAIPAATAKV (292 aa)) constitute a YjeF C-terminal domain. An ADP-dependent (S)-NAD(P)H-hydrate dehydratase region spans residues 277-574 (IGQHFTVLNM…TAKVDLKRIV (298 aa)). Residue Gly365 participates in (6S)-NADPHX binding. Residues 418-424 (HKGEFER) form an NADPHX 2; for dehydratase activity region. ADP contacts are provided by residues 461–465 (KGKYT) and 480–489 (HSWLATPGSG). Asp490 contributes to the (6S)-NADPHX binding site.

This sequence in the N-terminal section; belongs to the NnrE/AIBP family. In the C-terminal section; belongs to the NnrD/CARKD family. The cofactor is K(+).

The enzyme catalyses (6S)-NADHX + ADP = AMP + phosphate + NADH + H(+). It catalyses the reaction (6S)-NADPHX + ADP = AMP + phosphate + NADPH + H(+). It carries out the reaction (6R)-NADHX = (6S)-NADHX. The catalysed reaction is (6R)-NADPHX = (6S)-NADPHX. Bifunctional enzyme that catalyzes the epimerization of the S- and R-forms of NAD(P)HX and the dehydration of the S-form of NAD(P)HX at the expense of ADP, which is converted to AMP. This allows the repair of both epimers of NAD(P)HX, a damaged form of NAD(P)H that is a result of enzymatic or heat-dependent hydration. This is Bifunctional NAD(P)H-hydrate repair enzyme Nnr (nnr) from Corynebacterium glutamicum (strain ATCC 13032 / DSM 20300 / JCM 1318 / BCRC 11384 / CCUG 27702 / LMG 3730 / NBRC 12168 / NCIMB 10025 / NRRL B-2784 / 534).